A 339-amino-acid chain; its full sequence is DNA-directed RNA polymerase RPB7 homolog (339 aa).

This sequence belongs to the Asfivirus DNA-directed RNA polymerase RPB7 homolog family. As to quaternary structure, part of the viral DNA-directed RNA polymerase that consists of 8 polII-like subunits (RPB1, RPB2, RPB3, RPB5, RPB6, RPB7, RPB9, RPB10), a capping enzyme and a termination factor.

The protein localises to the host cytoplasm. It is found in the virion. Component of the DNA-directed RNA polymerase (RNAP) that catalyzes the transcription in the cytoplasm of viral DNA into RNA using the four ribonucleoside triphosphates as substrates. The protein is DNA-directed RNA polymerase RPB7 homolog of African swine fever virus (strain Badajoz 1971 Vero-adapted) (Ba71V).